We begin with the raw amino-acid sequence, 40 residues long: Large ribosomal subunit protein bL36A (40 aa).

The protein belongs to the bacterial ribosomal protein bL36 family.

The chain is Large ribosomal subunit protein bL36A from Paenarthrobacter aurescens (strain TC1).